Consider the following 108-residue polypeptide: UPF0060 membrane protein YE2027 (108 aa).

The next 4 membrane-spanning stretches (helical) occupy residues 6-26 (LLFF…YLWL), 29-49 (GASM…VWLL), 59-79 (VYAA…RVVD), and 85-105 (LFDW…VAGW).

Belongs to the UPF0060 family.

The protein localises to the cell inner membrane. The chain is UPF0060 membrane protein YE2027 from Yersinia enterocolitica serotype O:8 / biotype 1B (strain NCTC 13174 / 8081).